The following is a 671-amino-acid chain: MSHYTGIILKLESDRAIVLTDGLDFMELKLKPGMQRGQHVIFDESDLYSAGLITRYKSIIMPFSAFAAAAAVFLVILFSLRFVSISQEYAYIDVDINPSIGLVIDKKEKVIDAKPLNNDAKPILDEAAPKDMPLYDALSKILDISKKNGYINSADNIVLFSASINSGRNNVSESDKGIQEIISTLKDVAKDAGVKFEIIPSTEEDRQKALDQNLSMGRYAIYVKAVEEGVNLNLEDARNLSVSEILGKVNIGKFAISDTPEDSGIMPAISVPAEPVPSVTPAYTAVPEKTEAQPVDIPKSSPTPASFTAHVPTPPKTPSIPHTSGPAIVHTPAADKTTPTFTGSSTPVPTNVVAIASTPVPVSTPKPVSTPAYSSTPTPESTPVPVSTPKPASTPTPASTPKPVSTPTHVSTPKPISTPTSTPRPASTPKPTSTPTPESTPKPTSTPAPVSTPTSTPIPTYTSTPASTPIPAYTSTPTSIPTLTPATSPAPTSSPTPIPSPAPTETDLLTKIELQAYNHIRTSETKELQPRIKLINTGNTPITLSEVKIRYYYTKDQVINEIYTCDWSNITSSKITGTVVQMSNPKPNADSYVEIGFTNSAGVLNPGEYVEIISRIGNSYALSLATPPYSEWNYMYDQNSDYSFNNSSSDFVVWDKITVYISGTLYWGIEP.

The Cytoplasmic segment spans residues 1–57; that stretch reads MSHYTGIILKLESDRAIVLTDGLDFMELKLKPGMQRGQHVIFDESDLYSAGLITRYK. Residues 4–51 form the RsgI N-terminal anti-sigma domain; it reads YTGIILKLESDRAIVLTDGLDFMELKLKPGMQRGQHVIFDESDLYSAG. The chain crosses the membrane as a helical span at residues 58–78; the sequence is SIIMPFSAFAAAAAVFLVILF. Residues 79-671 are Extracellular-facing; that stretch reads SLRFVSISQE…SGTLYWGIEP (593 aa). Disordered regions lie at residues 290–323 and 359–505; these read TEAQ…IPHT and PVPV…APTE. Positions 359–379 are enriched in low complexity; it reads PVPVSTPKPVSTPAYSSTPTP. Positions 380 to 400 are enriched in pro residues; sequence ESTPVPVSTPKPASTPTPAST. The span at 401-425 shows a compositional bias: low complexity; the sequence is PKPVSTPTHVSTPKPISTPTSTPRP. Over residues 426 to 446 the composition is skewed to pro residues; sequence ASTPKPTSTPTPESTPKPTST. Low complexity predominate over residues 447–491; it reads PAPVSTPTSTPIPTYTSTPASTPIPAYTSTPTSIPTLTPATSPAP. The segment covering 492-502 has biased composition (pro residues); the sequence is TSSPTPIPSPA. Residues 508 to 671 enclose the CBM3 domain; it reads LLTKIELQAY…SGTLYWGIEP (164 aa). Positions 554, 556, 637, 640, and 641 each coordinate Ca(2+).

In terms of assembly, interacts (via RsgI N-terminal anti-sigma domain) with SigI2.

The protein localises to the cell membrane. Its function is as follows. Anti-sigma factor for SigI2. Negatively regulates SigI2 activity through direct interaction. Binding of the polysaccharide substrate to the extracellular C-terminal sensing domain of RsgI2 may induce a conformational change in its N-terminal cytoplasmic region, leading to the release and activation of SigI2. The sequence is that of Anti-sigma-I factor RsgI2 from Acetivibrio thermocellus (strain ATCC 27405 / DSM 1237 / JCM 9322 / NBRC 103400 / NCIMB 10682 / NRRL B-4536 / VPI 7372) (Clostridium thermocellum).